We begin with the raw amino-acid sequence, 168 residues long: Photosystem I assembly protein Ycf3 (168 aa).

3 TPR repeats span residues 35–68 (AFTYYRDGMSAQSEGNYAEALQNYYEAMRLEIDP), 72–105 (SYILYNIGLIHTSNGEHMKALEYYFRALERNPFL), and 120–153 (GEKAIQQGDSEIAEAWFDQAAEYWKQALALTPGN).

The protein belongs to the Ycf3 family.

It localises to the plastid membrane. In terms of biological role, essential for the assembly of the photosystem I (PSI) complex. May act as a chaperone-like factor to guide the assembly of the PSI subunits. In Cuscuta exaltata (Tall dodder), this protein is Photosystem I assembly protein Ycf3.